Consider the following 191-residue polypeptide: GDP-mannose pyrophosphatase (191 aa).

Residues Y17, 38-40 (KRE), R67, and 85-87 (AGL) contribute to the GDP-alpha-D-mannose site. In terms of domain architecture, Nudix hydrolase spans 43 to 180 (DRGNGATILL…EIRDGKTVLL (138 aa)). A85, E100, and E104 together coordinate Mg(2+). Positions 86–106 (GLLDNDEPEVCIRKEAIEETG) match the Nudix box motif. Residues E104, E127, 150–151 (DE), and K176 contribute to the GDP-alpha-D-mannose site. Position 151 (E151) interacts with Mg(2+).

It belongs to the Nudix hydrolase family. NudK subfamily. As to quaternary structure, homodimer. Mg(2+) serves as cofactor.

The catalysed reaction is GDP-alpha-D-mannose + H2O = alpha-D-mannose 1-phosphate + GMP + 2 H(+). In terms of biological role, nucleoside diphosphate sugar hydrolase that hydrolyzes GDP-mannose as its preferred substrate, yielding GMP and mannose-1-phosphate. This chain is GDP-mannose pyrophosphatase (nudK), found in Shigella dysenteriae serotype 1 (strain Sd197).